Here is a 258-residue protein sequence, read N- to C-terminus: MPLVIPAIDIRDGRCVRLHQGDYDNETVYFEDPVKMAKLWRVQNAQTLHVVDLDAARGEGEHNRDVIGKMCDALDIPIQLGGGIRSMDQIEAALDRGVYRVILGTAAVRNPDFVERAVEQFSARRVVVSIDARDGEVRVQGWTEGSGLDAVAFAKDMEQRGVRRLVYTDISRDGTMDGPNIQAYRTLGRQLAHAKVTASGGVGEHDDLLDIQTLQPYGVDSVIVGTALYENRFPCQQFWAWQDKDAVDLDTFSTASLR.

Aspartate 9 functions as the Proton acceptor in the catalytic mechanism. The active-site Proton donor is aspartate 131.

The protein belongs to the HisA/HisF family.

The protein localises to the cytoplasm. It carries out the reaction 1-(5-phospho-beta-D-ribosyl)-5-[(5-phospho-beta-D-ribosylamino)methylideneamino]imidazole-4-carboxamide = 5-[(5-phospho-1-deoxy-D-ribulos-1-ylimino)methylamino]-1-(5-phospho-beta-D-ribosyl)imidazole-4-carboxamide. It functions in the pathway amino-acid biosynthesis; L-histidine biosynthesis; L-histidine from 5-phospho-alpha-D-ribose 1-diphosphate: step 4/9. In Salinibacter ruber (strain DSM 13855 / M31), this protein is 1-(5-phosphoribosyl)-5-[(5-phosphoribosylamino)methylideneamino] imidazole-4-carboxamide isomerase.